The sequence spans 408 residues: Acetate kinase (408 aa).

Asn7 provides a ligand contact to Mg(2+). Lys14 contributes to the ATP binding site. Arg91 lines the substrate pocket. Asp148 acts as the Proton donor/acceptor in catalysis. Residues 208 to 212 (HLGNG) and 283 to 285 (DLR) each bind ATP. Residue Glu388 participates in Mg(2+) binding.

The protein belongs to the acetokinase family. Homodimer. It depends on Mg(2+) as a cofactor. Requires Mn(2+) as cofactor.

It localises to the cytoplasm. The enzyme catalyses acetate + ATP = acetyl phosphate + ADP. It functions in the pathway metabolic intermediate biosynthesis; acetyl-CoA biosynthesis; acetyl-CoA from acetate: step 1/2. In terms of biological role, catalyzes the formation of acetyl phosphate from acetate and ATP. Can also catalyze the reverse reaction. In Borrelia hermsii (strain HS1 / DAH), this protein is Acetate kinase.